A 152-amino-acid chain; its full sequence is Transcriptional regulator MraZ (152 aa).

SpoVT-AbrB domains follow at residues 5–52 and 81–124; these read ANAI…PLNE and ATES…DEDM.

This sequence belongs to the MraZ family. Forms oligomers.

The protein localises to the cytoplasm. The protein resides in the nucleoid. The chain is Transcriptional regulator MraZ from Psychromonas ingrahamii (strain DSM 17664 / CCUG 51855 / 37).